The sequence spans 467 residues: tRNA modification GTPase MnmE (467 aa).

3 residues coordinate (6S)-5-formyl-5,6,7,8-tetrahydrofolate: Arg-25, Glu-87, and Lys-130. A TrmE-type G domain is found at 226 to 389 (GLSVVLAGQP…LRGELLRIAG (164 aa)). Asn-236 lines the K(+) pocket. Residues 236–241 (NVGKSS), 255–261 (TPIAGTT), and 280–283 (DTAG) each bind GTP. Ser-240 contacts Mg(2+). 3 residues coordinate K(+): Thr-255, Ile-257, and Thr-260. Thr-261 is a binding site for Mg(2+). Lys-467 is a (6S)-5-formyl-5,6,7,8-tetrahydrofolate binding site.

It belongs to the TRAFAC class TrmE-Era-EngA-EngB-Septin-like GTPase superfamily. TrmE GTPase family. In terms of assembly, homodimer. Heterotetramer of two MnmE and two MnmG subunits. Requires K(+) as cofactor.

It is found in the cytoplasm. Its function is as follows. Exhibits a very high intrinsic GTPase hydrolysis rate. Involved in the addition of a carboxymethylaminomethyl (cmnm) group at the wobble position (U34) of certain tRNAs, forming tRNA-cmnm(5)s(2)U34. The chain is tRNA modification GTPase MnmE from Burkholderia thailandensis (strain ATCC 700388 / DSM 13276 / CCUG 48851 / CIP 106301 / E264).